The chain runs to 201 residues: Inosine triphosphate pyrophosphatase (201 aa).

16-21 contacts ITP; it reads TGNAKK. Glu44 provides a ligand contact to Mg(2+). ITP is bound by residues Lys56, 72–73, Lys89, 148–151, Lys171, and 176–177; these read DT, FGWD, and HR.

It belongs to the HAM1 NTPase family. Homodimer. Mg(2+) serves as cofactor. Requires Mn(2+) as cofactor.

The protein resides in the cytoplasm. It catalyses the reaction ITP + H2O = IMP + diphosphate + H(+). It carries out the reaction dITP + H2O = dIMP + diphosphate + H(+). The catalysed reaction is XTP + H2O = XMP + diphosphate + H(+). In terms of biological role, pyrophosphatase that hydrolyzes non-canonical purine nucleotides such as inosine triphosphate (ITP), deoxyinosine triphosphate (dITP) or xanthosine 5'-triphosphate (XTP) to their respective monophosphate derivatives. The enzyme does not distinguish between the deoxy- and ribose forms. Probably excludes non-canonical purines from RNA and DNA precursor pools, thus preventing their incorporation into RNA and DNA and avoiding chromosomal lesions. This chain is Inosine triphosphate pyrophosphatase, found in Sorghum bicolor (Sorghum).